A 222-amino-acid chain; its full sequence is MGKKAVCIISGGMDSALSAKIAQEEGYEIIALHFNYGQRTRNKELECFRKITQELNASESYEIDLDFFEQIGASALTDKSIDVPIGGLEEGVPVTYVPFRNGIFLSIAAAIAEKHGAEALFIGVVEEDSSGYPDCRESYIEQMQKAINLGTKDETNIEIKMPLVSLRKSQIVQKAIELGVPLEDTWSCYQAEDAACGVCDSCRLRLRGFEVAGVKDPIAYRK.

9–19 is a binding site for ATP; the sequence is ISGGMDSALSA. The Zn(2+) site is built by cysteine 188, cysteine 196, cysteine 199, and cysteine 202.

Belongs to the QueC family. Zn(2+) serves as cofactor.

The enzyme catalyses 7-carboxy-7-deazaguanine + NH4(+) + ATP = 7-cyano-7-deazaguanine + ADP + phosphate + H2O + H(+). It participates in purine metabolism; 7-cyano-7-deazaguanine biosynthesis. In terms of biological role, catalyzes the ATP-dependent conversion of 7-carboxy-7-deazaguanine (CDG) to 7-cyano-7-deazaguanine (preQ(0)). The chain is 7-cyano-7-deazaguanine synthase from Sulfurovum sp. (strain NBC37-1).